The primary structure comprises 279 residues: Cyanocobalamin reductase / alkylcobalamin dealkylase (279 aa).

Residues D104, 115-118 (ILAQ), 129-131 (YYQ), C149, and I160 contribute to the substrate site. Residues 239 to 279 (PSEHPSTTSELPLSLLTKPQNSRRARSWLSPSVSPPVSPGP) are disordered. Over residues 243-257 (PSTTSELPLSLLTKP) the composition is skewed to low complexity. S247, S272, and S276 each carry phosphoserine.

Belongs to the MMACHC family. Monomer in the absence of bound substrate. Homodimer; dimerization is triggered by binding to FMN or adenosylcobalamin. Interacts with LMBRD1 and ABCD4; the interaction ensures the transport of cobalamin from the lysosome to the cytoplasm. Forms a multiprotein complex with MMADHC, MTR and MTRR; the interaction with MTR could modulate MMACHC-dependent processing of cobalamin. Heterodimer with MMADHC; the interaction might play a role in the regulation of the balance between AdoCbl and MeCbl synthesis. FAD is required as a cofactor. FMN serves as cofactor. In terms of tissue distribution, detected in liver and kidney (at protein level). Detected in embryos.

The protein localises to the cytoplasm. It is found in the cytosol. The enzyme catalyses 2 cob(II)alamin-[cyanocobalamin reductase] + 2 hydrogen cyanide + NADP(+) = 2 cyanocob(III)alamin + 2 apo-[cyanocobalamin reductase] + NADPH + H(+). It catalyses the reaction apo-[alkylcobalamin reductase] + an R-cob(III)alamin + glutathione = cob(I)alamin-[alkylcobalamin reductase] + an S-substituted glutathione + H(+). It carries out the reaction apo-[alkylcobalamin reductase] + methylcob(III)alamin + glutathione = S-methyl glutathione + cob(I)alamin-[alkylcobalamin reductase] + H(+). The catalysed reaction is apo-[alkylcobalamin reductase] + adenosylcob(III)alamin + glutathione = S-adenosylglutathione + cob(I)alamin-[alkylcobalamin reductase] + H(+). Cobalamin (vitamin B12) cytosolic chaperone that catalyzes the reductive decyanation of cyanocob(III)alamin (cyanocobalamin, CNCbl) to yield cob(II)alamin and cyanide, using FAD or FMN as cofactors and NADPH as cosubstrate. Cyanocobalamin constitutes the inactive form of vitamin B12 introduced from the diet, and is converted into the active cofactors methylcobalamin (MeCbl) involved in methionine biosynthesis, and 5'-deoxyadenosylcobalamin (AdoCbl) involved in the TCA cycle. Forms a complex with the lysosomal transporter ABCD4 and its chaperone LMBRD1, to transport cobalamin across the lysosomal membrane into the cytosol. The processing of cobalamin in the cytosol occurs in a multiprotein complex composed of at least MMACHC, MMADHC, MTRR (methionine synthase reductase) and MTR (methionine synthase) which may contribute to shuttle safely and efficiently cobalamin towards MTR in order to produce methionine. Also acts as a glutathione transferase by catalyzing the dealkylation of the alkylcob(III)alamins MeCbl and AdoCbl, using the thiolate of glutathione for nucleophilic displacement to generate cob(I)alamin and the corresponding glutathione thioether. The conversion of incoming MeCbl or AdoCbl into a common intermediate cob(I)alamin is necessary to meet the cellular needs for both cofactors. Cysteine and homocysteine cannot substitute for glutathione in this reaction. This chain is Cyanocobalamin reductase / alkylcobalamin dealkylase, found in Mus musculus (Mouse).